Consider the following 249-residue polypeptide: 3-deoxy-manno-octulosonate cytidylyltransferase (249 aa).

It belongs to the KdsB family.

It is found in the cytoplasm. The catalysed reaction is 3-deoxy-alpha-D-manno-oct-2-ulosonate + CTP = CMP-3-deoxy-beta-D-manno-octulosonate + diphosphate. It participates in nucleotide-sugar biosynthesis; CMP-3-deoxy-D-manno-octulosonate biosynthesis; CMP-3-deoxy-D-manno-octulosonate from 3-deoxy-D-manno-octulosonate and CTP: step 1/1. Its pathway is bacterial outer membrane biogenesis; lipopolysaccharide biosynthesis. In terms of biological role, activates KDO (a required 8-carbon sugar) for incorporation into bacterial lipopolysaccharide in Gram-negative bacteria. The sequence is that of 3-deoxy-manno-octulosonate cytidylyltransferase from Brucella anthropi (strain ATCC 49188 / DSM 6882 / CCUG 24695 / JCM 21032 / LMG 3331 / NBRC 15819 / NCTC 12168 / Alc 37) (Ochrobactrum anthropi).